We begin with the raw amino-acid sequence, 205 residues long: Small ribosomal subunit protein uS4 (205 aa).

Basic and acidic residues predominate over residues 1 to 16; the sequence is MSKRESAKHKIDRRLG. Residues 1 to 46 are disordered; it reads MSKRESAKHKIDRRLGENIWGRPKSPVNRREYGPGQHGQRRKGKLS. The S4 RNA-binding domain occupies 94-157; that stretch reads SRLDAVVYRA…KQLAIVLEAV (64 aa).

It belongs to the universal ribosomal protein uS4 family. In terms of assembly, part of the 30S ribosomal subunit. Contacts protein S5. The interaction surface between S4 and S5 is involved in control of translational fidelity.

In terms of biological role, one of the primary rRNA binding proteins, it binds directly to 16S rRNA where it nucleates assembly of the body of the 30S subunit. With S5 and S12 plays an important role in translational accuracy. This chain is Small ribosomal subunit protein uS4, found in Brucella abortus (strain S19).